The following is a 428-amino-acid chain: Dihydroorotase (428 aa).

Zn(2+) is bound by residues His59 and His61. Substrate-binding positions include 61 to 63 (HFR) and Asn93. Asp151, His178, and His231 together coordinate Zn(2+). Residue Asn277 participates in substrate binding. Position 304 (Asp304) interacts with Zn(2+). Asp304 is a catalytic residue. Residues His308 and 322 to 323 (FG) each bind substrate.

It belongs to the metallo-dependent hydrolases superfamily. DHOase family. Class I DHOase subfamily. In terms of assembly, homodimer. Zn(2+) serves as cofactor.

The enzyme catalyses (S)-dihydroorotate + H2O = N-carbamoyl-L-aspartate + H(+). It functions in the pathway pyrimidine metabolism; UMP biosynthesis via de novo pathway; (S)-dihydroorotate from bicarbonate: step 3/3. In terms of biological role, catalyzes the reversible cyclization of carbamoyl aspartate to dihydroorotate. The sequence is that of Dihydroorotase from Bacillus subtilis (strain 168).